Consider the following 437-residue polypeptide: UDP-N-acetylmuramate--L-alanine ligase (437 aa).

Residue 114–120 (GTHGKTS) coordinates ATP.

Belongs to the MurCDEF family.

The protein localises to the cytoplasm. It catalyses the reaction UDP-N-acetyl-alpha-D-muramate + L-alanine + ATP = UDP-N-acetyl-alpha-D-muramoyl-L-alanine + ADP + phosphate + H(+). Its pathway is cell wall biogenesis; peptidoglycan biosynthesis. In terms of biological role, cell wall formation. The protein is UDP-N-acetylmuramate--L-alanine ligase of Lactobacillus acidophilus (strain ATCC 700396 / NCK56 / N2 / NCFM).